We begin with the raw amino-acid sequence, 65 residues long: Potassium channel toxin kappa-KTx 2.7 (65 aa).

The first 26 residues, 1 to 26 (MKTSGTVYVFLLLLAFGIFTDISSAC), serve as a signal peptide directing secretion. Residues 27–39 (SEQMDDEDSYEVE) constitute a propeptide that is removed on maturation. 2 disulfides stabilise this stretch: Cys45-Cys63 and Cys49-Cys59.

It belongs to the short scorpion toxin superfamily. Potassium channel inhibitor kappa-KTx family. Kappa-KTx 2 subfamily. As to expression, expressed by the venom gland.

Its subcellular location is the secreted. Functionally, weakly inhibits the Kv7.1/KCNQ1 channel (10 uM of the toxin inhibits currents by 17.8%). The sequence is that of Potassium channel toxin kappa-KTx 2.7 from Heterometrus petersii (Asian forest scorpion).